Here is a 550-residue protein sequence, read N- to C-terminus: Medium/long-chain-fatty-acid--CoA/3-oxocholest-4-en-26-oate--CoA ligase (550 aa).

ATP contacts are provided by residues 178–186, Asp419, Arg434, and Lys525; that span reads TGGTTGFPK. The interval 525 to 550 is disordered; the sequence is KPDYRWAKEQTEARPADDVHAAHVSA.

It belongs to the ATP-dependent AMP-binding enzyme family.

The enzyme catalyses a medium-chain fatty acid + ATP + CoA = a medium-chain fatty acyl-CoA + AMP + diphosphate. It catalyses the reaction a long-chain fatty acid + ATP + CoA = a long-chain fatty acyl-CoA + AMP + diphosphate. The catalysed reaction is (25S)-3-oxocholest-4-en-26-oate + ATP + CoA = (25S)-3-oxocholest-4-en-26-oyl-CoA + AMP + diphosphate. It functions in the pathway lipid metabolism; fatty acid biosynthesis. Its pathway is steroid metabolism; cholesterol metabolism. In terms of biological role, catalyzes the activation of medium/long-chain fatty acids as acyl-coenzyme A (acyl-CoA), which are then transferred to the multifunctional polyketide synthase (PKS) type III for further chain extension. Also involved in the degradation of cholesterol via the degradation of the side chains of C-24 branched-chain sterols. Catalyzes the ATP-dependent CoA thioesterification of the sterol 3-oxocholest-4-en-26-oate to yield 3-oxocholest-4-en-26-oyl-CoA. The sequence is that of Medium/long-chain-fatty-acid--CoA/3-oxocholest-4-en-26-oate--CoA ligase from Mycobacterium marinum (strain ATCC BAA-535 / M).